The primary structure comprises 57 residues: COP9 signalosome complex subunit 9 (57 aa).

Residue T26 is modified to Phosphothreonine.

Belongs to the CSN9 family. Component of the CSN complex, composed of COPS1/GPS1, COPS2, COPS3, COPS4, COPS5, COPS6, COPS7 (COPS7A or COPS7B), COPS8 and COPS9. In the complex, it interacts directly with COPS3, COPS5 and COPS6.

The protein localises to the nucleus. It is found in the cytoplasm. It localises to the nucleoplasm. Component of the COP9 signalosome complex (CSN), a complex involved in various cellular and developmental processes. The CSN complex is an essential regulator of the ubiquitin (Ubl) conjugation pathway by mediating the deneddylation of the cullin subunits of SCF-type E3 ligase complexes, leading to decrease the Ubl ligase activity of SCF-type complexes such as SCF, CSA or DDB2. The complex is also involved in phosphorylation of p53/TP53, c-jun/JUN, IkappaBalpha/NFKBIA, ITPK1 and IRF8/ICSBP, possibly via its association with CK2 and PKD kinases. CSN-dependent phosphorylation of TP53 and JUN promotes and protects degradation by the Ubl system, respectively. Plays a role in cell proliferation. This Mus musculus (Mouse) protein is COP9 signalosome complex subunit 9.